Consider the following 145-residue polypeptide: uncharacterized protein (145 aa).

A helical membrane pass occupies residues 4-24 (IYMLVALLISSLVLFAGCVQN).

Its subcellular location is the membrane. This is an uncharacterized protein from Methanocaldococcus jannaschii (strain ATCC 43067 / DSM 2661 / JAL-1 / JCM 10045 / NBRC 100440) (Methanococcus jannaschii).